Reading from the N-terminus, the 151-residue chain is Endoribonuclease YbeY (151 aa).

The Zn(2+) site is built by His108, His112, and Asp118.

The protein belongs to the endoribonuclease YbeY family. Zn(2+) serves as cofactor.

It localises to the cytoplasm. Single strand-specific metallo-endoribonuclease involved in late-stage 70S ribosome quality control and in maturation of the 3' terminus of the 16S rRNA. The polypeptide is Endoribonuclease YbeY (Porphyromonas gingivalis (strain ATCC 33277 / DSM 20709 / CIP 103683 / JCM 12257 / NCTC 11834 / 2561)).